A 372-amino-acid chain; its full sequence is Delta-type opioid receptor (372 aa).

Topologically, residues 1–47 (MELVPSARAELQSSPLVNLSDAFPSAFPSAGANASGSPGARSASSLA) are extracellular. N-linked (GlcNAc...) asparagine glycosylation is found at asparagine 18 and asparagine 33. The chain crosses the membrane as a helical span at residues 48 to 75 (LAIAITALYSAVCAVGLLGNVLVMFGIV). Residues 76–85 (RYTKLKTATN) are Cytoplasmic-facing. The chain crosses the membrane as a helical span at residues 86–110 (IYIFNLALADALATSTLPFQSAKYL). At 111 to 122 (METWPFGELLCK) the chain is on the extracellular side. A disulfide bridge connects residues cysteine 121 and cysteine 198. Residues 123 to 144 (AVLSIDYYNMFTSIFTLTMMSV) form a helical membrane-spanning segment. Residues 145-163 (DRYIAVCHPVKALDFRTPA) are Cytoplasmic-facing. The helical transmembrane segment at 164–186 (KAKLINICIWVLASGVGVPIMVM) threads the bilayer. Residues 187–206 (AVTQPRDGAVVCMLQFPSPS) are Extracellular-facing. A helical membrane pass occupies residues 207-238 (WYWDTVTKICVFLFAFVVPILIITVCYGLMLL). Residues 239–261 (RLRSVRLLSGSKEKDRSLRRITR) are Cytoplasmic-facing. The helical transmembrane segment at 262–284 (MVLVVVGAFVVCWAPIHIFVIVW) threads the bilayer. Residues 285-299 (TLVDINRRDPLVVAA) lie on the Extracellular side of the membrane. Residues 300 to 321 (LHLCIALGYANSSLNPVLYAFL) form a helical membrane-spanning segment. Residues 322 to 372 (DENFKRCFRQLCRTPCGRQEPGSLRRPRQATTRERVTACTPSDGPGGGAAA) are Cytoplasmic-facing. Cysteine 333 is lipidated: S-palmitoyl cysteine. The interval 340–372 (QEPGSLRRPRQATTRERVTACTPSDGPGGGAAA) is disordered.

It belongs to the G-protein coupled receptor 1 family. As to quaternary structure, may form homooligomers. Forms a heterodimer with OPRM1. Interacts with GPRASP1. Interacts with RTP4; the interaction promotes cell surface localization of the OPRD1-OPRM1 heterodimer. Post-translationally, ubiquitinated. A basal ubiquitination seems not to be related to degradation. Ubiquitination is increased upon formation of OPRM1:OPRD1 oligomers leading to proteasomal degradation; the ubiquitination is diminished by RTP4. As to expression, brain, with high concentrations in the basal ganglia and limbic regions.

It is found in the cell membrane. G-protein coupled receptor that functions as a receptor for endogenous enkephalins and for a subset of other opioids. Ligand binding causes a conformation change that triggers signaling via guanine nucleotide-binding proteins (G proteins) and modulates the activity of down-stream effectors, such as adenylate cyclase. Signaling leads to the inhibition of adenylate cyclase activity. Inhibits neurotransmitter release by reducing calcium ion currents and increasing potassium ion conductance. Plays a role in the perception of pain and in opiate-mediated analgesia. Plays a role in developing analgesic tolerance to morphine. This is Delta-type opioid receptor (Oprd1) from Mus musculus (Mouse).